A 224-amino-acid chain; its full sequence is Cytidylate kinase (224 aa).

Residue 11 to 19 (GPAGAGKST) participates in ATP binding.

It belongs to the cytidylate kinase family. Type 1 subfamily.

The protein resides in the cytoplasm. The enzyme catalyses CMP + ATP = CDP + ADP. The catalysed reaction is dCMP + ATP = dCDP + ADP. This chain is Cytidylate kinase, found in Lysinibacillus sphaericus (strain C3-41).